Consider the following 349-residue polypeptide: N-acetyl-gamma-glutamyl-phosphate reductase (349 aa).

Cysteine 149 is a catalytic residue.

It belongs to the NAGSA dehydrogenase family. Type 1 subfamily.

It localises to the cytoplasm. It catalyses the reaction N-acetyl-L-glutamate 5-semialdehyde + phosphate + NADP(+) = N-acetyl-L-glutamyl 5-phosphate + NADPH + H(+). Its pathway is amino-acid biosynthesis; L-arginine biosynthesis; N(2)-acetyl-L-ornithine from L-glutamate: step 3/4. Its function is as follows. Catalyzes the NADPH-dependent reduction of N-acetyl-5-glutamyl phosphate to yield N-acetyl-L-glutamate 5-semialdehyde. This Acinetobacter baumannii (strain AB307-0294) protein is N-acetyl-gamma-glutamyl-phosphate reductase.